A 479-amino-acid polypeptide reads, in one-letter code: MENITAQLKRGISRQFSTGSIRRTLSRQFTRQSSLDPRRTNMRFSFGRQSSLDPIRRSPDSSKSDDEPHMSVPENLDSTMQLLFMASKGDVRGIEELLDEGIDVNSIDLDGRTALHIAACEGHLGVVKALLSRRANIDARDRWGSTAAADAKYYGNLDVYNLLKARGAKVPKTRKTPMTVSNPREVPEYELNPLEVQVRKSDGISKGAYQVAKWNGTRVSVKILDKDSYSDPERINAFRHELTLLEKVRHPNVIQFVGAVTQNIPMMIVVEYNPKGDLSVYLQKKGRLSPSKALRFALDIARGMNYLHECKPDPIIHCDLKPKNILLDRGGQLKISGFGMIRLSKISQDKAKVANHKAHIDLSNYYIAPEVYKDEIFDLRVDAHSFGVILYEITEGVPVFHPRPPEEVARMMCLEGKRPVFKTKSRSYPPDIKELIEKCWHPEAGIRPTFSEIIIRLDKIVANCSKQGWWKDTFKFPWK.

Residues S17 and S26 each carry the phosphoserine modification. The tract at residues 29-73 is disordered; that stretch reads FTRQSSLDPRRTNMRFSFGRQSSLDPIRRSPDSSKSDDEPHMSVP. Basic and acidic residues predominate over residues 54–69; sequence PIRRSPDSSKSDDEPH. ANK repeat units lie at residues 77–106 and 110–139; these read DSTM…DVNS and DGRT…NIDA. A Protein kinase domain is found at 194–461; the sequence is LEVQVRKSDG…EIIIRLDKIV (268 aa). Residues 200–208 and K222 each bind ATP; that span reads KSDGISKGA. The Proton acceptor role is filled by D319.

Belongs to the protein kinase superfamily. Ser/Thr protein kinase family. In terms of assembly, interacts with CML9 and POT5/HAK5. In terms of processing, autophosphorylated at Ser-17 and Ser-26.

It localises to the cell membrane. The protein resides in the endoplasmic reticulum membrane. It catalyses the reaction L-seryl-[protein] + ATP = O-phospho-L-seryl-[protein] + ADP + H(+). The catalysed reaction is L-threonyl-[protein] + ATP = O-phospho-L-threonyl-[protein] + ADP + H(+). Kinase activity is suppressed by interaction with CML9. Functionally, functions as a link between plant defense pathways, stress responses and potassium homeostasis. Promotes osmotic stress sensitivity, responses to the bacterial-derived pathogen-associated molecular pattern (PAMP) flg22, and resistance to bacterial pathogens. Promotes the accumulation of POT5/HAK5, a potassium transporter that mediates high-affinity uptake during potassium deficiency. This chain is Integrin-linked protein kinase 1, found in Arabidopsis thaliana (Mouse-ear cress).